A 152-amino-acid polypeptide reads, in one-letter code: Biotin carboxyl carrier protein of acetyl-CoA carboxylase (152 aa).

Residues 72 to 148 (IIDILSPISG…TKNQVLMKII (77 aa)) enclose the Biotinyl-binding domain. Position 114 is an N6-biotinyllysine (Lys114).

It localises to the plastid. The protein resides in the chloroplast. It participates in lipid metabolism; fatty acid biosynthesis. This protein is a component of the acetyl coenzyme A carboxylase complex; first, biotin carboxylase catalyzes the carboxylation of the carrier protein and then the transcarboxylase transfers the carboxyl group to form malonyl-CoA. The polypeptide is Biotin carboxyl carrier protein of acetyl-CoA carboxylase (accB) (Cyanidium caldarium (Red alga)).